The following is a 32-amino-acid chain: Cytochrome b6-f complex subunit 8 (32 aa).

A helical transmembrane segment spans residues Ile6–Val26.

Belongs to the PetN family. In terms of assembly, the 4 large subunits of the cytochrome b6-f complex are cytochrome b6, subunit IV (17 kDa polypeptide, PetD), cytochrome f and the Rieske protein, while the 4 small subunits are PetG, PetL, PetM and PetN. The complex functions as a dimer.

It is found in the plastid. The protein localises to the chloroplast thylakoid membrane. Its function is as follows. Component of the cytochrome b6-f complex, which mediates electron transfer between photosystem II (PSII) and photosystem I (PSI), cyclic electron flow around PSI, and state transitions. This is Cytochrome b6-f complex subunit 8 from Illicium oligandrum (Star anise).